A 163-amino-acid polypeptide reads, in one-letter code: Nucleotide-binding protein BSU11020 (163 aa).

This sequence belongs to the YajQ family.

In terms of biological role, nucleotide-binding protein. The polypeptide is Nucleotide-binding protein BSU11020 (yitK) (Bacillus subtilis (strain 168)).